We begin with the raw amino-acid sequence, 563 residues long: Germacrene C/D synthase (563 aa).

The disordered stretch occupies residues 1 to 22; sequence MESCLSVSSAPPPKKNIQEPVR. Residues Asp-315, Asp-319, and Glu-468 each coordinate Mg(2+). Residues 315 to 319 carry the DDXXD motif motif; that stretch reads DDTYD.

This sequence belongs to the terpene synthase family. It depends on Mg(2+) as a cofactor. In terms of tissue distribution, predominantly expressed in root.

The enzyme catalyses (2E,6E)-farnesyl diphosphate = germacrene C + diphosphate. It carries out the reaction (2E,6E)-farnesyl diphosphate = (-)-germacrene D + diphosphate. Mediates formation of germacrene C and germacrene D using farnesyl diphosphate as substrate. Can also catalyze formation of trace of germacrene B. The chain is Germacrene C/D synthase (TPS1) from Valeriana officinalis (Valerian).